A 96-amino-acid polypeptide reads, in one-letter code: ATP-dependent Clp protease adapter protein ClpS (96 aa).

It belongs to the ClpS family. As to quaternary structure, binds to the N-terminal domain of the chaperone ClpA.

Functionally, involved in the modulation of the specificity of the ClpAP-mediated ATP-dependent protein degradation. In Campylobacter jejuni subsp. jejuni serotype O:6 (strain 81116 / NCTC 11828), this protein is ATP-dependent Clp protease adapter protein ClpS.